Reading from the N-terminus, the 690-residue chain is DNA ligase (690 aa).

NAD(+) is bound by residues 49-53 (DAEYD), 98-99 (SL), and Glu-129. Lys-131 (N6-AMP-lysine intermediate) is an active-site residue. NAD(+)-binding residues include Arg-152, Glu-191, Lys-308, and Lys-332. Zn(2+) is bound by residues Cys-426, Cys-429, Cys-444, and Cys-450. Residues 607-690 (EDAARLEGLT…ALLREQGIDA (84 aa)) enclose the BRCT domain.

It belongs to the NAD-dependent DNA ligase family. LigA subfamily. Mg(2+) serves as cofactor. The cofactor is Mn(2+).

The enzyme catalyses NAD(+) + (deoxyribonucleotide)n-3'-hydroxyl + 5'-phospho-(deoxyribonucleotide)m = (deoxyribonucleotide)n+m + AMP + beta-nicotinamide D-nucleotide.. Its function is as follows. DNA ligase that catalyzes the formation of phosphodiester linkages between 5'-phosphoryl and 3'-hydroxyl groups in double-stranded DNA using NAD as a coenzyme and as the energy source for the reaction. It is essential for DNA replication and repair of damaged DNA. This chain is DNA ligase, found in Salinibacter ruber (strain DSM 13855 / M31).